Consider the following 372-residue polypeptide: Alpha-parvin (372 aa).

Residues 1-11 are compositionally biased toward low complexity; it reads MATSPQKSPSV. A disordered region spans residues 1-44; sequence MATSPQKSPSVPKSPTPKSPPSRKKDDSFLGKLGGTLARRKKAK. Ala2 bears the N-acetylalanine mark. 3 positions are modified to phosphoserine: Ser8, Ser14, and Ser19. Residues 21-25 are interaction with ARHGAP31; the sequence is PSRKK. Phosphoserine is present on residues Ser28 and Ser62. Calponin-homology (CH) domains follow at residues 95–202 and 262–369; these read QELM…QYFR and NVVK…TKYR. The tract at residues 223–372 is required for interaction with TESK1 and ILK; it reads GILQSRQIQE…NLFTKYRNVE (150 aa).

The protein belongs to the parvin family. As to quaternary structure, component of the heterotrimeric IPP (ILK-PINCH-PARVIN) complex composed of ILK, LIMS1/PINCH and PARVA; the complex binds to F-actin via the C-terminal tail of LIMS1 and the N-terminal region of PARVA, promoting F-actin filament bundling. Interacts with TGFB1I1. Interacts with ARHGAP31. Interacts with the actin cytoskeleton. Interacts (via C-terminus) with TESK1 (via C-terminus); the interaction inhibits TESK1 kinase activity. Interacts with PXN/PAXILLIN (via LD motif 4). As to expression, widely expressed.

It localises to the cell junction. The protein localises to the focal adhesion. Its subcellular location is the cell membrane. The protein resides in the cytoplasm. It is found in the cytoskeleton. It localises to the myofibril. The protein localises to the sarcomere. Its subcellular location is the z line. Functionally, plays a role in sarcomere organization and in smooth muscle cell contraction. Required for normal development of the embryonic cardiovascular system, and for normal septation of the heart outflow tract. Plays a role in sprouting angiogenesis and is required for normal adhesion of vascular smooth muscle cells to endothelial cells during blood vessel development. Plays a role in the reorganization of the actin cytoskeleton, formation of lamellipodia and ciliogenesis. Plays a role in the establishment of cell polarity, cell adhesion, cell spreading, and directed cell migration. Within the IPP (ILK-PINCH-PARVIN) complex, binds to F-actin, promoting F-actin bundling, a process required to generate force for actin cytoskeleton reorganization and subsequent dynamic cell adhesion events such as cell spreading and migration. This is Alpha-parvin (Parva) from Rattus norvegicus (Rat).